Reading from the N-terminus, the 638-residue chain is Chaperone protein DnaK (638 aa).

Threonine 198 carries the post-translational modification Phosphothreonine; by autocatalysis. A disordered region spans residues 602–638 (QAKSQAQGGEEAQAKDAGQSNDDVVDAEFEEVKDDKK). Positions 624–638 (DVVDAEFEEVKDDKK) are enriched in acidic residues.

The protein belongs to the heat shock protein 70 family.

Its function is as follows. Acts as a chaperone. The protein is Chaperone protein DnaK of Shewanella denitrificans (strain OS217 / ATCC BAA-1090 / DSM 15013).